Consider the following 486-residue polypeptide: tRNA-2-methylthio-N(6)-dimethylallyladenosine synthase (486 aa).

The 117-residue stretch at 35–151 (RNLYVESYGC…LPRLLATVDS (117 aa)) folds into the MTTase N-terminal domain. Positions 44, 80, 114, 189, 193, and 196 each coordinate [4Fe-4S] cluster. One can recognise a Radical SAM core domain in the interval 175 to 419 (NSNGVSAFIS…IDKQRQHSFE (245 aa)). A TRAM domain is found at 422–485 (LKDIGKVYQV…TGTLLGEICT (64 aa)).

The protein belongs to the methylthiotransferase family. MiaB subfamily. In terms of assembly, monomer. The cofactor is [4Fe-4S] cluster.

It localises to the cytoplasm. The enzyme catalyses N(6)-dimethylallyladenosine(37) in tRNA + (sulfur carrier)-SH + AH2 + 2 S-adenosyl-L-methionine = 2-methylsulfanyl-N(6)-dimethylallyladenosine(37) in tRNA + (sulfur carrier)-H + 5'-deoxyadenosine + L-methionine + A + S-adenosyl-L-homocysteine + 2 H(+). In terms of biological role, catalyzes the methylthiolation of N6-(dimethylallyl)adenosine (i(6)A), leading to the formation of 2-methylthio-N6-(dimethylallyl)adenosine (ms(2)i(6)A) at position 37 in tRNAs that read codons beginning with uridine. The protein is tRNA-2-methylthio-N(6)-dimethylallyladenosine synthase of Amoebophilus asiaticus (strain 5a2).